The sequence spans 822 residues: AP-1 complex subunit gamma-1 (822 aa).

A disordered region spans residues 597–628 (EIVQTNGETEPAPLETKPPPSGPQPTSQANDL). Residues 702 to 817 (AGIPSITAYS…QDLAEVNNFP (116 aa)) enclose the GAE domain.

Belongs to the adaptor complexes large subunit family. Adaptor protein complex 1 (AP-1) is a heterotetramer composed of two large adaptins (gamma-type subunit AP1G1 and beta-type subunit AP1B1), a medium adaptin (mu-type subunit AP1M1 or AP1M2) and a small adaptin (sigma-type subunit AP1S1 or AP1S2 or AP1S3). Interacts (via GAE domain) with RABEP1. Interacts with EPS15. Interacts with SYNRG/gamma-synergin. Interacts (via GAE domain) with AP1AR (via coiled-coil domain). Interacts with CLN3 (via dileucine motif); this interaction facilitates lysosomal targeting. Interacts (via GAE domain) with AFTPH/aftiphilin; the interaction is required to recruit AFTPH/aftiphilin to the perinuclear region of the cell.

The protein resides in the golgi apparatus. Its subcellular location is the cytoplasmic vesicle. It localises to the clathrin-coated vesicle membrane. It is found in the cytoplasm. The protein localises to the perinuclear region. The protein resides in the clathrin-coated vesicle. Its subcellular location is the membrane. It localises to the clathrin-coated pit. Subunit of clathrin-associated adaptor protein complex 1 that plays a role in protein sorting in the late-Golgi/trans-Golgi network (TGN) and/or endosomes. The AP complexes mediate both the recruitment of clathrin to membranes and the recognition of sorting signals within the cytosolic tails of transmembrane cargo molecules. In association with AFTPH/aftiphilin in the aftiphilin/p200/gamma-synergin complex, involved in the trafficking of transferrin from early to recycling endosomes, and the membrane trafficking of furin and the lysosomal enzyme cathepsin D between the trans-Golgi network (TGN) and endosomes. This is AP-1 complex subunit gamma-1 (AP1G1) from Pongo abelii (Sumatran orangutan).